Consider the following 1137-residue polypeptide: Bone sialoprotein-binding protein (1137 aa).

The N-terminal stretch at 1–52 (MINRDNKKAITKKGMISNRLNKFSIRKYTVGTASILVGTTLIFGLGNQEAKA) is a signal peptide. Positions 53–601 (AENTSTENAK…GDGTVKPEEK (549 aa)) are ligand binding A region. Disordered stretches follow at residues 54–249 (ENTS…TAPT) and 675–697 (LPTK…VTVK). The segment covering 61–75 (AKQDEASASDNKEVV) has biased composition (basic and acidic residues). Over residues 77 to 89 (ETENNSTQKNDLT) the composition is skewed to polar residues. The span at 92-106 (IKKETNTDSHQEAKE) shows a compositional bias: basic and acidic residues. Low complexity predominate over residues 109–126 (TTSSTQQQQNNATTSTET). A compositionally biased stretch (basic and acidic residues) spans 130–145 (NIEKENVKPSTDKTAT). A compositionally biased stretch (polar residues) spans 158 to 207 (PNNTNNDVTTKPSTSEIQTTPTTPQESTNIENSQPQPTPSKVDNQVTDAT). Basic and acidic residues predominate over residues 216-241 (SKEELKNNPEKLKELVRNDSNTDRST). CNA-B domains lie at 602-714 (LYKI…YKEP), 715-824 (KYNL…YKTP), and 825-935 (KYSL…EEDT). Positions 896-1112 (TQTGTNTTED…TGSENNGSNN (217 aa)) are disordered. Acidic residues-rich tracts occupy residues 903–913 (TEDDKDADGGE) and 930–1076 (YFEE…DSDS). An LPXTG sorting signal motif is present at residues 1100-1104 (LPETG). Pentaglycyl murein peptidoglycan amidated threonine is present on threonine 1103. Positions 1104-1137 (GSENNGSNNATLFGGLFAALGSLLLFGRRKKQNK) are cleaved as a propeptide — removed by sortase.

The protein belongs to the serine-aspartate repeat-containing protein (SDr) family.

The protein localises to the secreted. It is found in the cell wall. Specifically interacts with bone sialoprotein (BSP), a glycoprotein of bone and dentin extracellular matrix. Could contribute to staphylococcal osteomyelitis and arthritis. The protein is Bone sialoprotein-binding protein (bbp) of Staphylococcus aureus (strain MRSA252).